The chain runs to 482 residues: High affinity 3',5'-cyclic-AMP phosphodiesterase 7A (482 aa).

Serine 84 is subject to Phosphoserine. The region spanning 136 to 458 is the PDEase domain; sequence LDDDYNGQAK…ASWKGLQREQ (323 aa). Histidine 212 (proton donor) is an active-site residue. Residues histidine 216, histidine 252, aspartate 253, and aspartate 362 each contribute to the a divalent metal cation site.

Belongs to the cyclic nucleotide phosphodiesterase family. PDE7 subfamily. In terms of assembly, interacts with CBFA2T3. It depends on a divalent metal cation as a cofactor. As to expression, found at high levels in skeletal muscle and at low levels in a variety of tissues including brain and heart. It is expressed as well in two T-cell lines. In terms of tissue distribution, found abundantly in skeletal muscle and at low levels in heart.

Its subcellular location is the cytoplasm. It localises to the cytosol. It catalyses the reaction 3',5'-cyclic AMP + H2O = AMP + H(+). It functions in the pathway purine metabolism; 3',5'-cyclic AMP degradation; AMP from 3',5'-cyclic AMP: step 1/1. Insensitive to all selective PDE inhibitors. Hydrolyzes the second messenger cAMP, which is a key regulator of many important physiological processes. May have a role in muscle signal transduction. The chain is High affinity 3',5'-cyclic-AMP phosphodiesterase 7A from Homo sapiens (Human).